The chain runs to 555 residues: 1,3-beta-glucanosyltransferase GAS2 (555 aa).

The first 24 residues, 1-24 (MNKKQNFYAAIIVAIFLCLQLSHG), serve as a signal peptide directing secretion. The cysteines at positions 89 and 118 are disulfide-linked. (1,3-beta-D-glucosyl)n contacts are provided by residues Tyr107, 134 to 142 (SEPDISINR), Asn175, Glu176, Asp217, and Arg222. Glu176 serves as the catalytic Proton donor. Intrachain disulfides connect Cys231–Cys367, Cys247–Cys278, Cys390–Cys442, Cys392–Cys489, Cys399–Cys466, and Cys419–Cys424. Glu275 functions as the Nucleophile in the catalytic mechanism. Residue Tyr307 participates in (1,3-beta-D-glucosyl)n binding. Asn498 is a glycosylation site (N-linked (GlcNAc...) asparagine). Residue Asp531 is the site of GPI-anchor amidated aspartate attachment. The propeptide at 532–555 (GTIAFKTSGFVILLISMIAAGILL) is removed in mature form.

This sequence belongs to the glycosyl hydrolase 72 family. In terms of processing, N-glycosylated.

It localises to the cell membrane. Its function is as follows. Splits internally a 1,3-beta-glucan molecule and transfers the newly generated reducing end (the donor) to the non-reducing end of another 1,3-beta-glucan molecule (the acceptor) forming a 1,3-beta linkage, resulting in the elongation of 1,3-beta-glucan chains in the cell wall. Involved in spore wall assembly. The protein is 1,3-beta-glucanosyltransferase GAS2 (GAS2) of Saccharomyces cerevisiae (strain ATCC 204508 / S288c) (Baker's yeast).